The chain runs to 444 residues: Tubulin beta-2 chain (444 aa).

Residues Gln11, Glu69, Ser138, Gly142, Thr143, Gly144, Asn204, and Asn226 each contribute to the GTP site. Residue Glu69 coordinates Mg(2+). Positions 422 to 444 (YQQYQDATAEEDDYDDGEGSTGD) are disordered. Positions 429–444 (TAEEDDYDDGEGSTGD) are enriched in acidic residues.

Belongs to the tubulin family. In terms of assembly, dimer of alpha and beta chains. A typical microtubule is a hollow water-filled tube with an outer diameter of 25 nm and an inner diameter of 15 nM. Alpha-beta heterodimers associate head-to-tail to form protofilaments running lengthwise along the microtubule wall with the beta-tubulin subunit facing the microtubule plus end conferring a structural polarity. Microtubules usually have 13 protofilaments but different protofilament numbers can be found in some organisms and specialized cells. It depends on Mg(2+) as a cofactor. Found in areas of rapidly dividing tissues.

It localises to the cytoplasm. Its subcellular location is the cytoskeleton. Its function is as follows. Tubulin is the major constituent of microtubules, a cylinder consisting of laterally associated linear protofilaments composed of alpha- and beta-tubulin heterodimers. Microtubules grow by the addition of GTP-tubulin dimers to the microtubule end, where a stabilizing cap forms. Below the cap, tubulin dimers are in GDP-bound state, owing to GTPase activity of alpha-tubulin. This chain is Tubulin beta-2 chain (TUBB2), found in Daucus carota (Wild carrot).